The chain runs to 119 residues: Large ribosomal subunit protein bL20 (119 aa).

Belongs to the bacterial ribosomal protein bL20 family.

Its function is as follows. Binds directly to 23S ribosomal RNA and is necessary for the in vitro assembly process of the 50S ribosomal subunit. It is not involved in the protein synthesizing functions of that subunit. The chain is Large ribosomal subunit protein bL20 from Thermoanaerobacter pseudethanolicus (strain ATCC 33223 / 39E) (Clostridium thermohydrosulfuricum).